A 257-amino-acid chain; its full sequence is Adenosylcobinamide-GDP ribazoletransferase (257 aa).

A run of 6 helical transmembrane segments spans residues 4–24 (AVRG…WWLG), 40–60 (VVGL…QWFF), 64–84 (FVVQ…LLHL), 116–136 (AAVA…AALL), 140–160 (AALA…ALLI), and 193–213 (LFVT…VVAV).

This sequence belongs to the CobS family. It depends on Mg(2+) as a cofactor.

It is found in the cell inner membrane. The enzyme catalyses alpha-ribazole + adenosylcob(III)inamide-GDP = adenosylcob(III)alamin + GMP + H(+). The catalysed reaction is alpha-ribazole 5'-phosphate + adenosylcob(III)inamide-GDP = adenosylcob(III)alamin 5'-phosphate + GMP + H(+). The protein operates within cofactor biosynthesis; adenosylcobalamin biosynthesis; adenosylcobalamin from cob(II)yrinate a,c-diamide: step 7/7. Functionally, joins adenosylcobinamide-GDP and alpha-ribazole to generate adenosylcobalamin (Ado-cobalamin). Also synthesizes adenosylcobalamin 5'-phosphate from adenosylcobinamide-GDP and alpha-ribazole 5'-phosphate. The chain is Adenosylcobinamide-GDP ribazoletransferase from Alkalilimnicola ehrlichii (strain ATCC BAA-1101 / DSM 17681 / MLHE-1).